Reading from the N-terminus, the 326-residue chain is Transmembrane protein 171 (326 aa).

A run of 4 helical transmembrane segments spans residues 22–42 (IFFL…LSIF), 57–77 (MMLK…VILA), 114–134 (LIFG…GIWV), and 161–181 (FLSL…FFVV). A disordered region spans residues 229 to 326 (FPESSASAAA…LSPSSEPSPP (98 aa)). Residues 230-240 (PESSASAAARS) are compositionally biased toward low complexity. Residues 257–266 (SIFQSGSPTP) are compositionally biased toward polar residues. 2 stretches are compositionally biased toward low complexity: residues 288 to 302 (SSSE…LSEL) and 312 to 326 (ATTT…PSPP).

It localises to the membrane. The chain is Transmembrane protein 171 (TMEM171) from Bos taurus (Bovine).